The sequence spans 145 residues: Putative antiporter subunit mnhG2 (145 aa).

Transmembrane regions (helical) follow at residues 11–31 (IAAVMLLLGSFIALISAIGIV), 51–71 (VLLTLIGVLIYFIVNTGFFSV), and 72–92 (RLLLSLVFINLTSPVGMHLVA).

The protein belongs to the CPA3 antiporters (TC 2.A.63) subunit G family. May form a heterooligomeric complex that consists of seven subunits: mnhA2, mnhB2, mnhC2, mnhD2, mnhE2, mnhF2 and mnhG2.

It is found in the cell membrane. This chain is Putative antiporter subunit mnhG2 (mnhG2), found in Staphylococcus aureus (strain MRSA252).